A 143-amino-acid polypeptide reads, in one-letter code: Hemoglobin subunit alpha-A (143 aa).

One can recognise a Globin domain in the interval Ser-2–Arg-143. His-60 serves as a coordination point for O2. Position 89 (His-89) interacts with heme b.

This sequence belongs to the globin family. As to quaternary structure, heterotetramer of two alpha chains and two beta chains. Red blood cells.

Involved in oxygen transport from gills to the various peripheral tissues. The chain is Hemoglobin subunit alpha-A (hbaa) from Seriola quinqueradiata (Five-ray yellowtail).